We begin with the raw amino-acid sequence, 618 residues long: Chaperone protein DnaK (618 aa).

Threonine 175 bears the Phosphothreonine; by autocatalysis mark. A disordered region spans residues 576–618 (SQNAEPGADGGANSGANPGGTTGNTDTKDDNVVDAEYKVDDDK). Residues 583 to 597 (ADGGANSGANPGGTT) are compositionally biased toward gly residues. The segment covering 601-618 (DTKDDNVVDAEYKVDDDK) has biased composition (basic and acidic residues).

The protein belongs to the heat shock protein 70 family.

Functionally, acts as a chaperone. This chain is Chaperone protein DnaK, found in Clostridium kluyveri (strain NBRC 12016).